The chain runs to 322 residues: Trans-acting factor B (322 aa).

The segment at 35–188 (DDAEAVFPTS…ASTQEAETAE (154 aa)) is disordered. Polar residues-rich tracts occupy residues 72 to 97 (QEST…SIGR) and 110 to 166 (QESP…TSRA). Residues 167–178 (AETRERSPEHTE) are compositionally biased toward basic and acidic residues.

Plasmid partition require REP1, REP2, and a cis-acting DNA sequence (known as STB). REP1 may act by intercalating in the yeast nuclear matrix and binding STB either directly or via REP2. The sequence is that of Trans-acting factor B (B) from Zygosaccharomyces bisporus.